The primary structure comprises 100 residues: Aspartyl/glutamyl-tRNA(Asn/Gln) amidotransferase subunit C (100 aa).

The protein belongs to the GatC family. Heterotrimer of A, B and C subunits.

The enzyme catalyses L-glutamyl-tRNA(Gln) + L-glutamine + ATP + H2O = L-glutaminyl-tRNA(Gln) + L-glutamate + ADP + phosphate + H(+). The catalysed reaction is L-aspartyl-tRNA(Asn) + L-glutamine + ATP + H2O = L-asparaginyl-tRNA(Asn) + L-glutamate + ADP + phosphate + 2 H(+). Its function is as follows. Allows the formation of correctly charged Asn-tRNA(Asn) or Gln-tRNA(Gln) through the transamidation of misacylated Asp-tRNA(Asn) or Glu-tRNA(Gln) in organisms which lack either or both of asparaginyl-tRNA or glutaminyl-tRNA synthetases. The reaction takes place in the presence of glutamine and ATP through an activated phospho-Asp-tRNA(Asn) or phospho-Glu-tRNA(Gln). This Rickettsia canadensis (strain McKiel) protein is Aspartyl/glutamyl-tRNA(Asn/Gln) amidotransferase subunit C.